A 360-amino-acid chain; its full sequence is uncharacterized protein (360 aa).

This is an uncharacterized protein from Escherichia coli (strain UTI89 / UPEC).